The chain runs to 212 residues: Protein-L-isoaspartate O-methyltransferase (212 aa).

Serine 56 is a catalytic residue.

It belongs to the methyltransferase superfamily. L-isoaspartyl/D-aspartyl protein methyltransferase family.

The protein resides in the cytoplasm. The enzyme catalyses [protein]-L-isoaspartate + S-adenosyl-L-methionine = [protein]-L-isoaspartate alpha-methyl ester + S-adenosyl-L-homocysteine. In terms of biological role, catalyzes the methyl esterification of L-isoaspartyl residues in peptides and proteins that result from spontaneous decomposition of normal L-aspartyl and L-asparaginyl residues. It plays a role in the repair and/or degradation of damaged proteins. This Myxococcus xanthus (strain DK1622) protein is Protein-L-isoaspartate O-methyltransferase.